A 200-amino-acid polypeptide reads, in one-letter code: Recombination protein RecR (200 aa).

Residues 57–72 (CSQCRTFTEQETCAIC) form a C4-type zinc finger. In terms of domain architecture, Toprim spans 81 to 176 (GLLCVVEMPA…KVSRIAHGIP (96 aa)).

It belongs to the RecR family.

In terms of biological role, may play a role in DNA repair. It seems to be involved in an RecBC-independent recombinational process of DNA repair. It may act with RecF and RecO. This Actinobacillus succinogenes (strain ATCC 55618 / DSM 22257 / CCUG 43843 / 130Z) protein is Recombination protein RecR.